The primary structure comprises 141 residues: Hemoglobin subunit alpha-A (141 aa).

The 141-residue stretch at 1–141 (VLSASDKTNV…VAKELTAKYR (141 aa)) folds into the Globin domain. His58 contacts O2. His87 contributes to the heme b binding site.

It belongs to the globin family. Heterotetramer of two alpha chains and two beta chains. As to expression, red blood cells.

Its function is as follows. Involved in oxygen transport from the lung to the various peripheral tissues. This chain is Hemoglobin subunit alpha-A (HBAA), found in Phalacrocorax carbo (Great cormorant).